The primary structure comprises 496 residues: Probable glycine dehydrogenase (decarboxylating) subunit 2 (496 aa).

N6-(pyridoxal phosphate)lysine is present on Lys-265.

Belongs to the GcvP family. C-terminal subunit subfamily. As to quaternary structure, the glycine cleavage system is composed of four proteins: P, T, L and H. In this organism, the P 'protein' is a heterodimer of two subunits. Requires pyridoxal 5'-phosphate as cofactor.

The enzyme catalyses N(6)-[(R)-lipoyl]-L-lysyl-[glycine-cleavage complex H protein] + glycine + H(+) = N(6)-[(R)-S(8)-aminomethyldihydrolipoyl]-L-lysyl-[glycine-cleavage complex H protein] + CO2. In terms of biological role, the glycine cleavage system catalyzes the degradation of glycine. The P protein binds the alpha-amino group of glycine through its pyridoxal phosphate cofactor; CO(2) is released and the remaining methylamine moiety is then transferred to the lipoamide cofactor of the H protein. The protein is Probable glycine dehydrogenase (decarboxylating) subunit 2 of Thioalkalivibrio sulfidiphilus (strain HL-EbGR7).